A 494-amino-acid chain; its full sequence is Calmodulin-binding protein 60 A (494 aa).

The tract at residues 1–62 is calmodulin-binding; it reads MRIPTYDFGS…AGIKWICEKE (62 aa). Residues 132 to 252 are DNA-binding; sequence VSDWTDEDIR…AFHRRLNLSN (121 aa).

This sequence belongs to the plant ACBP60 protein family. Interacts with calmodulin (CaM). Expressed in stems, flowers and root.

It is found in the nucleus. Transcription activator that binds DNA in a sequence-specific manner, likely 5'-GAAATTTTGG-3', to promote the expression of target genes. This chain is Calmodulin-binding protein 60 A, found in Arabidopsis thaliana (Mouse-ear cress).